The following is a 346-amino-acid chain: Holliday junction branch migration complex subunit RuvB (346 aa).

Residues 1–181 (MSDRNPLIDA…FGIPVRLNFY (181 aa)) form a large ATPase domain (RuvB-L) region. ATP-binding positions include L20, R21, G62, K65, T66, T67, 128–130 (EDF), R171, Y181, and R218. T66 contributes to the Mg(2+) binding site. Residues 182–252 (TVEELEYIVR…IADEALSRLE (71 aa)) are small ATPAse domain (RuvB-S). Residues 255-346 (NRGLDQLDRR…SQYGLFMEDE (92 aa)) are head domain (RuvB-H). Positions 291, 310, and 315 each coordinate DNA.

It belongs to the RuvB family. Homohexamer. Forms an RuvA(8)-RuvB(12)-Holliday junction (HJ) complex. HJ DNA is sandwiched between 2 RuvA tetramers; dsDNA enters through RuvA and exits via RuvB. An RuvB hexamer assembles on each DNA strand where it exits the tetramer. Each RuvB hexamer is contacted by two RuvA subunits (via domain III) on 2 adjacent RuvB subunits; this complex drives branch migration. In the full resolvosome a probable DNA-RuvA(4)-RuvB(12)-RuvC(2) complex forms which resolves the HJ.

The protein localises to the cytoplasm. The enzyme catalyses ATP + H2O = ADP + phosphate + H(+). Its function is as follows. The RuvA-RuvB-RuvC complex processes Holliday junction (HJ) DNA during genetic recombination and DNA repair, while the RuvA-RuvB complex plays an important role in the rescue of blocked DNA replication forks via replication fork reversal (RFR). RuvA specifically binds to HJ cruciform DNA, conferring on it an open structure. The RuvB hexamer acts as an ATP-dependent pump, pulling dsDNA into and through the RuvAB complex. RuvB forms 2 homohexamers on either side of HJ DNA bound by 1 or 2 RuvA tetramers; 4 subunits per hexamer contact DNA at a time. Coordinated motions by a converter formed by DNA-disengaged RuvB subunits stimulates ATP hydrolysis and nucleotide exchange. Immobilization of the converter enables RuvB to convert the ATP-contained energy into a lever motion, pulling 2 nucleotides of DNA out of the RuvA tetramer per ATP hydrolyzed, thus driving DNA branch migration. The RuvB motors rotate together with the DNA substrate, which together with the progressing nucleotide cycle form the mechanistic basis for DNA recombination by continuous HJ branch migration. Branch migration allows RuvC to scan DNA until it finds its consensus sequence, where it cleaves and resolves cruciform DNA. In Brucella suis (strain ATCC 23445 / NCTC 10510), this protein is Holliday junction branch migration complex subunit RuvB.